The chain runs to 443 residues: ATP-dependent protease ATPase subunit HslU (443 aa).

Residues I20, 62 to 67 (GVGKTE), D255, E321, and R393 contribute to the ATP site.

The protein belongs to the ClpX chaperone family. HslU subfamily. In terms of assembly, a double ring-shaped homohexamer of HslV is capped on each side by a ring-shaped HslU homohexamer. The assembly of the HslU/HslV complex is dependent on binding of ATP.

The protein resides in the cytoplasm. ATPase subunit of a proteasome-like degradation complex; this subunit has chaperone activity. The binding of ATP and its subsequent hydrolysis by HslU are essential for unfolding of protein substrates subsequently hydrolyzed by HslV. HslU recognizes the N-terminal part of its protein substrates and unfolds these before they are guided to HslV for hydrolysis. The polypeptide is ATP-dependent protease ATPase subunit HslU (Helicobacter pylori (strain G27)).